The sequence spans 383 residues: Acetylornithine deacetylase (383 aa).

Position 80 (His80) interacts with Zn(2+). Asp82 is an active-site residue. Position 112 (Asp112) interacts with Zn(2+). Glu144 is a catalytic residue. Residues Glu145, Glu169, and His355 each coordinate Zn(2+).

It belongs to the peptidase M20A family. ArgE subfamily. As to quaternary structure, homodimer. Zn(2+) serves as cofactor. Co(2+) is required as a cofactor. The cofactor is glutathione.

It is found in the cytoplasm. It carries out the reaction N(2)-acetyl-L-ornithine + H2O = L-ornithine + acetate. Its pathway is amino-acid biosynthesis; L-arginine biosynthesis; L-ornithine from N(2)-acetyl-L-ornithine (linear): step 1/1. Functionally, catalyzes the hydrolysis of the amide bond of N(2)-acetylated L-amino acids. Cleaves the acetyl group from N-acetyl-L-ornithine to form L-ornithine, an intermediate in L-arginine biosynthesis pathway, and a branchpoint in the synthesis of polyamines. This chain is Acetylornithine deacetylase, found in Shigella flexneri serotype 5b (strain 8401).